The following is a 200-amino-acid chain: NADH-quinone oxidoreductase subunit B (200 aa).

Residues C79, C80, C144, and C174 each contribute to the [4Fe-4S] cluster site.

The protein belongs to the complex I 20 kDa subunit family. As to quaternary structure, NDH-1 is composed of 14 different subunits. Subunits NuoB, C, D, E, F, and G constitute the peripheral sector of the complex. It depends on [4Fe-4S] cluster as a cofactor.

The protein resides in the cell inner membrane. It catalyses the reaction a quinone + NADH + 5 H(+)(in) = a quinol + NAD(+) + 4 H(+)(out). In terms of biological role, NDH-1 shuttles electrons from NADH, via FMN and iron-sulfur (Fe-S) centers, to quinones in the respiratory chain. The immediate electron acceptor for the enzyme in this species is believed to be ubiquinone. Couples the redox reaction to proton translocation (for every two electrons transferred, four hydrogen ions are translocated across the cytoplasmic membrane), and thus conserves the redox energy in a proton gradient. The protein is NADH-quinone oxidoreductase subunit B of Caulobacter vibrioides (strain NA1000 / CB15N) (Caulobacter crescentus).